Reading from the N-terminus, the 200-residue chain is RPW8-like protein 4 (200 aa).

Residues 1–157 (MPIAELAVIK…MKAIQVDQWT (157 aa)) enclose the RPW8 domain. A helical transmembrane segment spans residues 7-29 (AVIKTVGGPLIAAALGVGAQVIY). Residues 70–127 (REVHESLTRLLEDAKSIIEKYWKLRWSRHVCRKYRYIKKLESIELELVRVAREIQVHQ) adopt a coiled-coil conformation.

It belongs to the plant RPW8 protein family.

The protein localises to the membrane. Its function is as follows. Probable disease resistance (R) protein. The chain is RPW8-like protein 4 (HR4) from Arabidopsis thaliana (Mouse-ear cress).